The sequence spans 366 residues: Peptide chain release factor 1 (366 aa).

Gln239 carries the N5-methylglutamine modification.

This sequence belongs to the prokaryotic/mitochondrial release factor family. Methylated by PrmC. Methylation increases the termination efficiency of RF1.

Its subcellular location is the cytoplasm. Functionally, peptide chain release factor 1 directs the termination of translation in response to the peptide chain termination codons UAG and UAA. This Albidiferax ferrireducens (strain ATCC BAA-621 / DSM 15236 / T118) (Rhodoferax ferrireducens) protein is Peptide chain release factor 1.